The sequence spans 247 residues: 2,3-bisphosphoglycerate-dependent phosphoglycerate mutase (247 aa).

Residues 8-15 (RHGESTWN), 21-22 (TG), R60, 87-90 (ERHY), K98, 114-115 (RR), and 183-184 (GN) each bind substrate. Catalysis depends on H9, which acts as the Tele-phosphohistidine intermediate. The active-site Proton donor/acceptor is E87.

The protein belongs to the phosphoglycerate mutase family. BPG-dependent PGAM subfamily. Homodimer.

It catalyses the reaction (2R)-2-phosphoglycerate = (2R)-3-phosphoglycerate. It functions in the pathway carbohydrate degradation; glycolysis; pyruvate from D-glyceraldehyde 3-phosphate: step 3/5. Functionally, catalyzes the interconversion of 2-phosphoglycerate and 3-phosphoglycerate. This is 2,3-bisphosphoglycerate-dependent phosphoglycerate mutase from Leptothrix cholodnii (strain ATCC 51168 / LMG 8142 / SP-6) (Leptothrix discophora (strain SP-6)).